The primary structure comprises 426 residues: Glutamate-1-semialdehyde 2,1-aminomutase (426 aa).

An N6-(pyridoxal phosphate)lysine modification is found at lysine 265.

It belongs to the class-III pyridoxal-phosphate-dependent aminotransferase family. HemL subfamily. Homodimer. Pyridoxal 5'-phosphate is required as a cofactor.

The protein localises to the cytoplasm. The catalysed reaction is (S)-4-amino-5-oxopentanoate = 5-aminolevulinate. The protein operates within porphyrin-containing compound metabolism; protoporphyrin-IX biosynthesis; 5-aminolevulinate from L-glutamyl-tRNA(Glu): step 2/2. The protein is Glutamate-1-semialdehyde 2,1-aminomutase of Escherichia fergusonii (strain ATCC 35469 / DSM 13698 / CCUG 18766 / IAM 14443 / JCM 21226 / LMG 7866 / NBRC 102419 / NCTC 12128 / CDC 0568-73).